The following is a 233-amino-acid chain: RNA/RNP complex-1-interacting phosphatase homolog (233 aa).

Basic residues predominate over residues 1–14; the sequence is MSNYHHNHNYQHRP. Residues 1 to 21 are disordered; sequence MSNYHHNHNYQHRPRGYERLP. The Tyrosine-protein phosphatase domain occupies 34-206; sequence NVGRDIDGTR…LYEAERKKKY (173 aa). Catalysis depends on cysteine 150, which acts as the Phosphocysteine intermediate. 151–156 contacts substrate; that stretch reads THGLNR. Catalysis depends on arginine 156, which acts as the Proton donor/acceptor. The tract at residues 204–233 is disordered; the sequence is KKYGKSSGKSSGNSADSTISSEQLHRNNSQ. The segment covering 208–217 has biased composition (low complexity); it reads KSSGKSSGNS. The span at 218–233 shows a compositional bias: polar residues; it reads ADSTISSEQLHRNNSQ.

Belongs to the protein-tyrosine phosphatase family. Non-receptor class dual specificity subfamily. Interacts with the ERI/DICER complex component dcr-1. Interacts with ERI/DICER complex components rrf-3 and isoform b of eri-1. Interacts with drh-3 and rde-8.

The protein resides in the cytoplasm. It is found in the nucleus. Its function is as follows. RNA polyphosphatase which has RNA 5'-triphosphatase and diphosphatase activities. Displays poor protein-tyrosine phosphatase activity. Binds to 5'-triphosphorylated RNAs (also called ppp-RNAs). Dephosphorylates ppp-RNAs converting them to 5'-monophosphorylated RNAs (also called p-RNAs). During small-RNA-mediated gene-silencing or RNA interference (RNAi), involved in the dcr-1-mediated processing of an amplified dsRNA intermediate. This is most likely in association with several components of the ERI/DICER complex including dcr-1, eri-1 and rrf-3. Plays a role in the biogenesis of 26G small interfering RNAs (26G-siRNAs), which are a class of 26 nucleotide siRNAs that possess a guanine residue at the 5'-end, by dephosphorylating 5'-triphosphorylated 26G-siRNAs prior to their maturation by the ERI/DICER complex. Plays a role in the biogenesis of csr-1-bound 22G small interfering RNAs (22G-siRNAs), which are a class of 22 nucleotide siRNAs that possess a guanine residue at the 5'-end. Not required for the biogenesis of microRNAs (miRNA) or for the biogenesis of a class of 21 nucleotide PIWI-interacting RNAs (piRNAs) that possess a uracil residue at the 5'-end (also called 21U-RNAs). In Caenorhabditis elegans, this protein is RNA/RNP complex-1-interacting phosphatase homolog.